A 236-amino-acid polypeptide reads, in one-letter code: Phosphoribosylaminoimidazole-succinocarboxamide synthase (236 aa).

It belongs to the SAICAR synthetase family.

It catalyses the reaction 5-amino-1-(5-phospho-D-ribosyl)imidazole-4-carboxylate + L-aspartate + ATP = (2S)-2-[5-amino-1-(5-phospho-beta-D-ribosyl)imidazole-4-carboxamido]succinate + ADP + phosphate + 2 H(+). Its pathway is purine metabolism; IMP biosynthesis via de novo pathway; 5-amino-1-(5-phospho-D-ribosyl)imidazole-4-carboxamide from 5-amino-1-(5-phospho-D-ribosyl)imidazole-4-carboxylate: step 1/2. This chain is Phosphoribosylaminoimidazole-succinocarboxamide synthase, found in Pseudomonas aeruginosa (strain LESB58).